A 368-amino-acid polypeptide reads, in one-letter code: MPLPAIDPAEYASQLADKVTQFKHAFTPFAVPEPTVFPSAPLHYRLRAEFRMWHDGERIDYAMFDPAEPKQPIAIEQFDIAAEPICAAMPRLRERLRASETLKRRLFQVEFLATLSGELMISLIYHRPLDESWEAAARELAAELNVQLIGRSRKQKIVLDRDWVLERFALDGRPLQYKQIEGSFTQPNGGVNRQMLGWACEQVRGVGGDLLELYCGNGNFTVALAPLFDRVLATEVSKTSVEAAHYNLAANDIGNVAMVRMSSDEISAALARTREFRRMKDVDLDRYRFSTLFVDPPRSGLDAPTVELARGFDRILYISCNPQTLQENVAALQATHGIAGAAVFDQFPYTRHLECGLLLTRRGGPRAP.

The S-adenosyl-L-methionine site is built by glutamine 186, tyrosine 214, asparagine 219, glutamate 235, and aspartate 295. Cysteine 320 acts as the Nucleophile in catalysis. Glutamate 354 functions as the Proton acceptor in the catalytic mechanism.

It belongs to the class I-like SAM-binding methyltransferase superfamily. RNA M5U methyltransferase family. TrmA subfamily.

It catalyses the reaction uridine(54) in tRNA + S-adenosyl-L-methionine = 5-methyluridine(54) in tRNA + S-adenosyl-L-homocysteine + H(+). The enzyme catalyses uridine(341) in tmRNA + S-adenosyl-L-methionine = 5-methyluridine(341) in tmRNA + S-adenosyl-L-homocysteine + H(+). Functionally, dual-specificity methyltransferase that catalyzes the formation of 5-methyluridine at position 54 (m5U54) in all tRNAs, and that of position 341 (m5U341) in tmRNA (transfer-mRNA). The sequence is that of tRNA/tmRNA (uracil-C(5))-methyltransferase from Aromatoleum aromaticum (strain DSM 19018 / LMG 30748 / EbN1) (Azoarcus sp. (strain EbN1)).